Reading from the N-terminus, the 136-residue chain is UPF0216 protein PYRAB16100 (136 aa).

Belongs to the UPF0216 family.

This is UPF0216 protein PYRAB16100 from Pyrococcus abyssi (strain GE5 / Orsay).